A 156-amino-acid polypeptide reads, in one-letter code: Transcription antitermination protein NusB (156 aa).

This sequence belongs to the NusB family.

Its function is as follows. Involved in transcription antitermination. Required for transcription of ribosomal RNA (rRNA) genes. Binds specifically to the boxA antiterminator sequence of the ribosomal RNA (rrn) operons. This Rickettsia africae (strain ESF-5) protein is Transcription antitermination protein NusB.